A 275-amino-acid polypeptide reads, in one-letter code: NH(3)-dependent NAD(+) synthetase (275 aa).

Gly50–Ser57 is a binding site for ATP. Asp56 is a Mg(2+) binding site. Residue Arg147 participates in deamido-NAD(+) binding. Thr167 contributes to the ATP binding site. Residue Glu172 coordinates Mg(2+). Residues Lys180 and Asp187 each contribute to the deamido-NAD(+) site. Lys196 and Thr218 together coordinate ATP. His267 to Lys268 is a deamido-NAD(+) binding site.

This sequence belongs to the NAD synthetase family. As to quaternary structure, homodimer.

The enzyme catalyses deamido-NAD(+) + NH4(+) + ATP = AMP + diphosphate + NAD(+) + H(+). It participates in cofactor biosynthesis; NAD(+) biosynthesis; NAD(+) from deamido-NAD(+) (ammonia route): step 1/1. Functionally, catalyzes the ATP-dependent amidation of deamido-NAD to form NAD. Uses ammonia as a nitrogen source. This chain is NH(3)-dependent NAD(+) synthetase, found in Pseudomonas syringae pv. tomato (strain ATCC BAA-871 / DC3000).